The following is a 140-amino-acid chain: Hemoglobin subunit alpha-D (140 aa).

In terms of domain architecture, Globin spans 1–140; that stretch reads MLTDSDKKLV…VCTVLAEKYR (140 aa). Residues histidine 57 and histidine 86 each coordinate heme b.

It belongs to the globin family. As to quaternary structure, heterotetramer of two alpha-D chains and two beta chains. As to expression, red blood cells.

Involved in oxygen transport from the lung to the various peripheral tissues. In Columba livia (Rock dove), this protein is Hemoglobin subunit alpha-D (HBAD).